A 459-amino-acid polypeptide reads, in one-letter code: GTPase Der (459 aa).

EngA-type G domains lie at Pro4 to Ala169 and Ile179 to Arg355. GTP is bound by residues Gly10–Ser17, Asp57–Leu61, Asn120–Glu123, Gly185–Ser192, Asp232–Ile236, and Asn297–Asp300. A KH-like domain is found at Lys356–Ser441.

The protein belongs to the TRAFAC class TrmE-Era-EngA-EngB-Septin-like GTPase superfamily. EngA (Der) GTPase family. Associates with the 50S ribosomal subunit.

Functionally, GTPase that plays an essential role in the late steps of ribosome biogenesis. This Synechococcus sp. (strain JA-3-3Ab) (Cyanobacteria bacterium Yellowstone A-Prime) protein is GTPase Der.